Reading from the N-terminus, the 238-residue chain is Pyridoxine 5'-phosphate synthase (238 aa).

3-amino-2-oxopropyl phosphate is bound by residues Asn7 and Arg18. His43 serves as the catalytic Proton acceptor. 2 residues coordinate 1-deoxy-D-xylulose 5-phosphate: Arg45 and His50. The Proton acceptor role is filled by Glu70. Position 100 (Thr100) interacts with 1-deoxy-D-xylulose 5-phosphate. The Proton donor role is filled by His190. 3-amino-2-oxopropyl phosphate-binding positions include Asp191 and Gly213 to His214.

This sequence belongs to the PNP synthase family. In terms of assembly, homooctamer; tetramer of dimers.

Its subcellular location is the cytoplasm. The catalysed reaction is 3-amino-2-oxopropyl phosphate + 1-deoxy-D-xylulose 5-phosphate = pyridoxine 5'-phosphate + phosphate + 2 H2O + H(+). It participates in cofactor biosynthesis; pyridoxine 5'-phosphate biosynthesis; pyridoxine 5'-phosphate from D-erythrose 4-phosphate: step 5/5. Catalyzes the complicated ring closure reaction between the two acyclic compounds 1-deoxy-D-xylulose-5-phosphate (DXP) and 3-amino-2-oxopropyl phosphate (1-amino-acetone-3-phosphate or AAP) to form pyridoxine 5'-phosphate (PNP) and inorganic phosphate. The polypeptide is Pyridoxine 5'-phosphate synthase (Porphyromonas gingivalis (strain ATCC 33277 / DSM 20709 / CIP 103683 / JCM 12257 / NCTC 11834 / 2561)).